Consider the following 185-residue polypeptide: Ribosome-recycling factor (185 aa).

This sequence belongs to the RRF family.

It localises to the cytoplasm. Responsible for the release of ribosomes from messenger RNA at the termination of protein biosynthesis. May increase the efficiency of translation by recycling ribosomes from one round of translation to another. The polypeptide is Ribosome-recycling factor (Bacillus cereus (strain G9842)).